Reading from the N-terminus, the 286-residue chain is ATP phosphoribosyltransferase (286 aa).

Belongs to the ATP phosphoribosyltransferase family. Long subfamily. Mg(2+) serves as cofactor.

The protein resides in the cytoplasm. The enzyme catalyses 1-(5-phospho-beta-D-ribosyl)-ATP + diphosphate = 5-phospho-alpha-D-ribose 1-diphosphate + ATP. The protein operates within amino-acid biosynthesis; L-histidine biosynthesis; L-histidine from 5-phospho-alpha-D-ribose 1-diphosphate: step 1/9. Feedback inhibited by histidine. Functionally, catalyzes the condensation of ATP and 5-phosphoribose 1-diphosphate to form N'-(5'-phosphoribosyl)-ATP (PR-ATP). Has a crucial role in the pathway because the rate of histidine biosynthesis seems to be controlled primarily by regulation of HisG enzymatic activity. The sequence is that of ATP phosphoribosyltransferase from Cytophaga hutchinsonii (strain ATCC 33406 / DSM 1761 / CIP 103989 / NBRC 15051 / NCIMB 9469 / D465).